The primary structure comprises 300 residues: MKIAILSRDGTLYSCKRLREAAIQRGHLVEVLDPLSCYMNINPAASSIHYKGRKLPHFDAVIPRIGSAITFYGTAALRQFEMLGSYPLNESVAIARARDKLRSMQLLARQGIDLPVTGIAHSPDDTSDLIDMVGGAPLVVKLVEGTQGIGVVLAETRQAAESVIDAFRGLNAHILVQEYIKEAKGRDIRCLVVGDEVVAAIERRAKEGDFRSNLHRGGAASIACITEREREIALKAARTMALDVAGVDILRAERGPLVMEVNASPGLEGIEKTTGVDIAGKMIRWIERHATPEFCLKTGG.

The ATP-grasp domain maps to 104–287 (MQLLARQGID…IAGKMIRWIE (184 aa)). ATP contacts are provided by residues K141, 178-179 (EY), D187, and 211-213 (RSN). The Mg(2+) site is built by D248, E260, and N262. Residues D248, E260, and N262 each coordinate Mn(2+).

Belongs to the RimK family. Requires Mg(2+) as cofactor. The cofactor is Mn(2+).

An L-glutamate ligase that catalyzes the ATP-dependent post-translational addition of glutamate residues to the C-terminus of ribosomal protein bS6 (RpsF). Is also able to catalyze the synthesis of poly-alpha-glutamate in vitro, via ATP hydrolysis from unprotected glutamate as substrate. The number of glutamate residues added to either RpsF or to poly-alpha-glutamate changes with pH. The sequence is that of Ribosomal protein bS6--L-glutamate ligase from Escherichia fergusonii (strain ATCC 35469 / DSM 13698 / CCUG 18766 / IAM 14443 / JCM 21226 / LMG 7866 / NBRC 102419 / NCTC 12128 / CDC 0568-73).